We begin with the raw amino-acid sequence, 320 residues long: Cytochrome f (320 aa).

Positions methionine 1–alanine 35 are cleaved as a signal peptide. Positions 36, 56, 59, and 60 each coordinate heme. The helical transmembrane segment at valine 286–lysine 306 threads the bilayer.

It belongs to the cytochrome f family. As to quaternary structure, the 4 large subunits of the cytochrome b6-f complex are cytochrome b6, subunit IV (17 kDa polypeptide, petD), cytochrome f and the Rieske protein, while the 4 small subunits are PetG, PetL, PetM and PetN. The complex functions as a dimer. It depends on heme as a cofactor.

The protein localises to the plastid. The protein resides in the chloroplast thylakoid membrane. Component of the cytochrome b6-f complex, which mediates electron transfer between photosystem II (PSII) and photosystem I (PSI), cyclic electron flow around PSI, and state transitions. The sequence is that of Cytochrome f from Lepidium virginicum (Virginia pepperweed).